A 147-amino-acid chain; its full sequence is Transcription antitermination protein NusB (147 aa).

It belongs to the NusB family.

In terms of biological role, involved in transcription antitermination. Required for transcription of ribosomal RNA (rRNA) genes. Binds specifically to the boxA antiterminator sequence of the ribosomal RNA (rrn) operons. The chain is Transcription antitermination protein NusB from Legionella pneumophila (strain Paris).